The primary structure comprises 249 residues: Transcription repressor MYB5 (249 aa).

HTH myb-type domains are found at residues 20–72 and 73–127; these read KMGM…MNYL and RPSV…RKKL. DNA-binding regions (H-T-H motif) lie at residues 48–72 and 100–123; these read WRSLPKRAGLLRCGKSCRLRWMNYL and WSLIAGRIPGRTDNEIKNYWNTHL. The disordered stretch occupies residues 133 to 180; it reads DPQTHKPLDANNIHKPEEEVSGGQKYPLEPISSSHTDDTTVNGGDGDS. Residues 135–150 show a composition bias toward basic and acidic residues; that stretch reads QTHKPLDANNIHKPEE.

As to quaternary structure, interacts with BHLH002/EGL3/MYC146, BHLH012/MYC1 and BHLH042/TT8. In terms of tissue distribution, siliques.

It localises to the nucleus. Functionally, transcription activator, when associated with BHLH002/EGL3/MYC146, BHLH012/MYC1 or BHLH042/TT8. This is Transcription repressor MYB5 (MYB5) from Arabidopsis thaliana (Mouse-ear cress).